The following is a 156-amino-acid chain: Gamma-L-glutamyl-butirosin B gamma-glutamyl cyclotransferase (156 aa).

24 to 27 lines the substrate pocket; that stretch reads YGTL. Glu-89 functions as the Proton acceptor in the catalytic mechanism.

This sequence belongs to the gamma-glutamylcyclotransferase family.

It catalyses the reaction gamma-L-glutamyl-butirosin B = butirosin B + 5-oxo-L-proline. Its pathway is antibiotic biosynthesis; butirosin biosynthesis. In terms of biological role, cyclotransferase that catalyzes the last step in the biosynthesis of the aminoglycoside antibiotic butirosin B. Cleaves the amide bond via transamidation using the alpha-amine of the terminal gamma-L-glutamate of the side chain, releasing it as the cyclic 5-oxoproline. The polypeptide is Gamma-L-glutamyl-butirosin B gamma-glutamyl cyclotransferase (btrG) (Niallia circulans (Bacillus circulans)).